A 58-amino-acid chain; its full sequence is uncharacterized protein (58 aa).

This is an uncharacterized protein from Sinorhizobium fredii (strain NBRC 101917 / NGR234).